Consider the following 236-residue polypeptide: Small ribosomal subunit protein uS2c (236 aa).

It belongs to the universal ribosomal protein uS2 family.

The protein resides in the plastid. The protein localises to the chloroplast. This is Small ribosomal subunit protein uS2c (rps2) from Piper cenocladum (Ant piper).